A 487-amino-acid polypeptide reads, in one-letter code: N-succinylglutamate 5-semialdehyde dehydrogenase (487 aa).

221–226 (GSSDTG) serves as a coordination point for NAD(+). Residues glutamate 244 and cysteine 278 contribute to the active site.

The protein belongs to the aldehyde dehydrogenase family. AstD subfamily.

It catalyses the reaction N-succinyl-L-glutamate 5-semialdehyde + NAD(+) + H2O = N-succinyl-L-glutamate + NADH + 2 H(+). Its pathway is amino-acid degradation; L-arginine degradation via AST pathway; L-glutamate and succinate from L-arginine: step 4/5. In terms of biological role, catalyzes the NAD-dependent reduction of succinylglutamate semialdehyde into succinylglutamate. The chain is N-succinylglutamate 5-semialdehyde dehydrogenase from Burkholderia ambifaria (strain MC40-6).